We begin with the raw amino-acid sequence, 123 residues long: Large ribosomal subunit protein uL14 (123 aa).

Belongs to the universal ribosomal protein uL14 family. Part of the 50S ribosomal subunit. Forms a cluster with proteins L3 and L19. In the 70S ribosome, L14 and L19 interact and together make contacts with the 16S rRNA in bridges B5 and B8.

Functionally, binds to 23S rRNA. Forms part of two intersubunit bridges in the 70S ribosome. The sequence is that of Large ribosomal subunit protein uL14 from Serratia proteamaculans (strain 568).